The primary structure comprises 546 residues: Chaperonin GroEL 2 (546 aa).

ATP is bound by residues 30–33 (TLGP), Lys51, 87–91 (DGTTT), Gly415, and Asp496.

Belongs to the chaperonin (HSP60) family. In terms of assembly, forms a cylinder of 14 subunits composed of two heptameric rings stacked back-to-back. Interacts with the co-chaperonin GroES.

It localises to the cytoplasm. It catalyses the reaction ATP + H2O + a folded polypeptide = ADP + phosphate + an unfolded polypeptide.. In terms of biological role, together with its co-chaperonin GroES, plays an essential role in assisting protein folding. The GroEL-GroES system forms a nano-cage that allows encapsulation of the non-native substrate proteins and provides a physical environment optimized to promote and accelerate protein folding. This is Chaperonin GroEL 2 from Bradyrhizobium sp. (strain ORS 278).